The chain runs to 82 residues: Small ribosomal subunit protein bS16 (82 aa).

Belongs to the bacterial ribosomal protein bS16 family.

This is Small ribosomal subunit protein bS16 from Haemophilus influenzae (strain 86-028NP).